The primary structure comprises 238 residues: Ribosomal RNA small subunit methyltransferase G (238 aa).

Residues glycine 78, phenylalanine 83, 129 to 130 (AE), and arginine 148 each bind S-adenosyl-L-methionine. The segment at 217–238 (KKKETPKKYPRKAGTPAKSPIK) is disordered.

It belongs to the methyltransferase superfamily. RNA methyltransferase RsmG family.

The protein resides in the cytoplasm. In terms of biological role, specifically methylates the N7 position of a guanine in 16S rRNA. The sequence is that of Ribosomal RNA small subunit methyltransferase G from Lactococcus lactis subsp. cremoris (strain SK11).